The following is a 197-amino-acid chain: Transcription factor FapR (197 aa).

The protein belongs to the FapR family.

In terms of biological role, transcriptional factor involved in regulation of membrane lipid biosynthesis by repressing genes involved in fatty acid and phospholipid metabolism. This chain is Transcription factor FapR, found in Bacillus cereus (strain B4264).